Reading from the N-terminus, the 115-residue chain is NADH-ubiquinone oxidoreductase chain 3 (115 aa).

3 consecutive transmembrane segments (helical) span residues 4–24 (LTAL…AFWL), 55–75 (FFLV…LLPL), and 87–107 (MMLT…YEWM).

It belongs to the complex I subunit 3 family. As to quaternary structure, core subunit of respiratory chain NADH dehydrogenase (Complex I) which is composed of 45 different subunits. Interacts with TMEM186. Interacts with TMEM242.

The protein resides in the mitochondrion inner membrane. The enzyme catalyses a ubiquinone + NADH + 5 H(+)(in) = a ubiquinol + NAD(+) + 4 H(+)(out). Core subunit of the mitochondrial membrane respiratory chain NADH dehydrogenase (Complex I) which catalyzes electron transfer from NADH through the respiratory chain, using ubiquinone as an electron acceptor. Essential for the catalytic activity of complex I. This Peromyscus boylii (Brush deermouse) protein is NADH-ubiquinone oxidoreductase chain 3.